Here is a 301-residue protein sequence, read N- to C-terminus: Ribosomal protein L11 methyltransferase (301 aa).

The S-adenosyl-L-methionine site is built by Thr146, Gly167, Asp189, and Asn237.

Belongs to the methyltransferase superfamily. PrmA family.

It localises to the cytoplasm. The enzyme catalyses L-lysyl-[protein] + 3 S-adenosyl-L-methionine = N(6),N(6),N(6)-trimethyl-L-lysyl-[protein] + 3 S-adenosyl-L-homocysteine + 3 H(+). Its function is as follows. Methylates ribosomal protein L11. The chain is Ribosomal protein L11 methyltransferase from Prochlorococcus marinus (strain MIT 9313).